Reading from the N-terminus, the 480-residue chain is Aspartyl/glutamyl-tRNA(Asn/Gln) amidotransferase subunit B (480 aa).

This sequence belongs to the GatB/GatE family. GatB subfamily. In terms of assembly, heterotrimer of A, B and C subunits.

The catalysed reaction is L-glutamyl-tRNA(Gln) + L-glutamine + ATP + H2O = L-glutaminyl-tRNA(Gln) + L-glutamate + ADP + phosphate + H(+). The enzyme catalyses L-aspartyl-tRNA(Asn) + L-glutamine + ATP + H2O = L-asparaginyl-tRNA(Asn) + L-glutamate + ADP + phosphate + 2 H(+). Allows the formation of correctly charged Asn-tRNA(Asn) or Gln-tRNA(Gln) through the transamidation of misacylated Asp-tRNA(Asn) or Glu-tRNA(Gln) in organisms which lack either or both of asparaginyl-tRNA or glutaminyl-tRNA synthetases. The reaction takes place in the presence of glutamine and ATP through an activated phospho-Asp-tRNA(Asn) or phospho-Glu-tRNA(Gln). This Streptococcus pneumoniae serotype 2 (strain D39 / NCTC 7466) protein is Aspartyl/glutamyl-tRNA(Asn/Gln) amidotransferase subunit B.